Reading from the N-terminus, the 220-residue chain is Deoxyribose-phosphate aldolase 2 (220 aa).

Asp89 serves as the catalytic Proton donor/acceptor. Lys151 functions as the Schiff-base intermediate with acetaldehyde in the catalytic mechanism. The active-site Proton donor/acceptor is the Lys180.

This sequence belongs to the DeoC/FbaB aldolase family. DeoC type 1 subfamily.

The protein resides in the cytoplasm. It catalyses the reaction 2-deoxy-D-ribose 5-phosphate = D-glyceraldehyde 3-phosphate + acetaldehyde. The protein operates within carbohydrate degradation; 2-deoxy-D-ribose 1-phosphate degradation; D-glyceraldehyde 3-phosphate and acetaldehyde from 2-deoxy-alpha-D-ribose 1-phosphate: step 2/2. Its function is as follows. Catalyzes a reversible aldol reaction between acetaldehyde and D-glyceraldehyde 3-phosphate to generate 2-deoxy-D-ribose 5-phosphate. This chain is Deoxyribose-phosphate aldolase 2, found in Staphylococcus aureus (strain MSSA476).